The chain runs to 197 residues: Imidazoleglycerol-phosphate dehydratase (197 aa).

This sequence belongs to the imidazoleglycerol-phosphate dehydratase family.

The protein localises to the cytoplasm. It catalyses the reaction D-erythro-1-(imidazol-4-yl)glycerol 3-phosphate = 3-(imidazol-4-yl)-2-oxopropyl phosphate + H2O. It participates in amino-acid biosynthesis; L-histidine biosynthesis; L-histidine from 5-phospho-alpha-D-ribose 1-diphosphate: step 6/9. The chain is Imidazoleglycerol-phosphate dehydratase from Nitrobacter hamburgensis (strain DSM 10229 / NCIMB 13809 / X14).